The sequence spans 253 residues: Aspartate/glutamate leucyltransferase (253 aa).

The protein belongs to the R-transferase family. Bpt subfamily.

The protein resides in the cytoplasm. It catalyses the reaction N-terminal L-glutamyl-[protein] + L-leucyl-tRNA(Leu) = N-terminal L-leucyl-L-glutamyl-[protein] + tRNA(Leu) + H(+). The catalysed reaction is N-terminal L-aspartyl-[protein] + L-leucyl-tRNA(Leu) = N-terminal L-leucyl-L-aspartyl-[protein] + tRNA(Leu) + H(+). In terms of biological role, functions in the N-end rule pathway of protein degradation where it conjugates Leu from its aminoacyl-tRNA to the N-termini of proteins containing an N-terminal aspartate or glutamate. In Allorhizobium ampelinum (strain ATCC BAA-846 / DSM 112012 / S4) (Agrobacterium vitis (strain S4)), this protein is Aspartate/glutamate leucyltransferase.